A 368-amino-acid polypeptide reads, in one-letter code: Chaperone protein DnaJ (368 aa).

A J domain is found at 5 to 70 (DYYQVLGVPR…KKRKLYDTHG (66 aa)). The segment at 124-201 (GVERQIQIPT…CNGAGRVEDH (78 aa)) adopts a CR-type zinc-finger fold. Positions 137, 140, 153, 156, 175, 178, 189, and 192 each coordinate Zn(2+). 4 CXXCXGXG motif repeats span residues 137-144 (CTHCNGSG), 153-160 (CGTCRGSG), 175-182 (CPHCGGRG), and 189-196 (CKVCNGAG).

It belongs to the DnaJ family. In terms of assembly, homodimer. It depends on Zn(2+) as a cofactor.

The protein localises to the cytoplasm. In terms of biological role, participates actively in the response to hyperosmotic and heat shock by preventing the aggregation of stress-denatured proteins and by disaggregating proteins, also in an autonomous, DnaK-independent fashion. Unfolded proteins bind initially to DnaJ; upon interaction with the DnaJ-bound protein, DnaK hydrolyzes its bound ATP, resulting in the formation of a stable complex. GrpE releases ADP from DnaK; ATP binding to DnaK triggers the release of the substrate protein, thus completing the reaction cycle. Several rounds of ATP-dependent interactions between DnaJ, DnaK and GrpE are required for fully efficient folding. Also involved, together with DnaK and GrpE, in the DNA replication of plasmids through activation of initiation proteins. This chain is Chaperone protein DnaJ, found in Xylella fastidiosa (strain M12).